A 204-amino-acid polypeptide reads, in one-letter code: MSKFIVIEGLDGAGKSTAIGFIKKYLDSKSLAAVYTREPGGTKVAEELRSIVLHNDYDEEIHPDSELLMIYAGRIQHYRNLIAPALTKGVNVVSDRFYWSSIAYQGGGRELGVDKLNVLNETFLKDCQPDLIIYLDIDPAIGLARAGKVGSPDRIEKAGLAFFDRTRAVFKSLVAANHNAYEIDASQSIDVIEKEIYAILDKYF.

Position 9-16 (9-16 (GLDGAGKS)) interacts with ATP.

It belongs to the thymidylate kinase family.

The catalysed reaction is dTMP + ATP = dTDP + ADP. Phosphorylation of dTMP to form dTDP in both de novo and salvage pathways of dTTP synthesis. The sequence is that of Thymidylate kinase from Francisella philomiragia subsp. philomiragia (strain ATCC 25017 / CCUG 19701 / FSC 153 / O#319-036).